A 230-amino-acid chain; its full sequence is Putative 14-3-3-like protein GF14-H (230 aa).

It belongs to the 14-3-3 family.

Its function is as follows. Is associated with a DNA binding complex that binds to the G box, a well-characterized cis-acting DNA regulatory element found in plant genes. This chain is Putative 14-3-3-like protein GF14-H (GF14H), found in Oryza sativa subsp. japonica (Rice).